Here is a 315-residue protein sequence, read N- to C-terminus: Voltage-dependent calcium channel gamma-3 subunit (315 aa).

A run of 4 helical transmembrane segments spans residues 8-28 (IQML…TIAV), 104-124 (SSVF…CVAA), 135-155 (ILSA…GIIV), and 181-201 (FGAF…HIYI). Positions 232 to 253 (RRRSSSRSTEPRSRDLSPISKG) are disordered. Residue Ser-248 is modified to Phosphoserine.

The protein belongs to the PMP-22/EMP/MP20 family. CACNG subfamily. The L-type calcium channel is composed of five subunits: alpha-1, alpha-2/delta, beta and gamma. Acts as an auxiliary subunit for AMPA-selective glutamate receptors (AMPARs). Found in a complex with GRIA1, GRIA2, GRIA3, GRIA4, CNIH2, CNIH3, CACNG2, CACNG4, CACNG5, CACNG7 and CACNG8. Interacts with AP4M1 and GRIA1; associates GRIA1 with the adaptor protein complex 4 (AP-4) to target GRIA1 to the somatodendritic compartment of neurons.

Its subcellular location is the membrane. In terms of biological role, regulates the trafficking to the somatodendritic compartment and gating properties of AMPA-selective glutamate receptors (AMPARs). Promotes their targeting to the cell membrane and synapses and modulates their gating properties by slowing their rates of activation, deactivation and desensitization. Does not show subunit-specific AMPA receptor regulation and regulates all AMPAR subunits. Thought to stabilize the calcium channel in an inactivated (closed) state. The sequence is that of Voltage-dependent calcium channel gamma-3 subunit (Cacng3) from Mus musculus (Mouse).